The primary structure comprises 109 residues: ATP synthase subunit c (109 aa).

The next 2 membrane-spanning stretches (helical) occupy residues 42-62 (YIGT…QGFS) and 88-108 (LALA…IIFV).

The protein belongs to the ATPase C chain family. As to quaternary structure, F-type ATPases have 2 components, F(1) - the catalytic core - and F(0) - the membrane proton channel. F(1) has five subunits: alpha(3), beta(3), gamma(1), delta(1), epsilon(1). F(0) has three main subunits: a(1), b(2) and c(10-14). The alpha and beta chains form an alternating ring which encloses part of the gamma chain. F(1) is attached to F(0) by a central stalk formed by the gamma and epsilon chains, while a peripheral stalk is formed by the delta and b chains.

The protein resides in the cell membrane. In terms of biological role, f(1)F(0) ATP synthase produces ATP from ADP in the presence of a proton or sodium gradient. F-type ATPases consist of two structural domains, F(1) containing the extramembraneous catalytic core and F(0) containing the membrane proton channel, linked together by a central stalk and a peripheral stalk. During catalysis, ATP synthesis in the catalytic domain of F(1) is coupled via a rotary mechanism of the central stalk subunits to proton translocation. Its function is as follows. Key component of the F(0) channel; it plays a direct role in translocation across the membrane. A homomeric c-ring of between 10-14 subunits forms the central stalk rotor element with the F(1) delta and epsilon subunits. The polypeptide is ATP synthase subunit c (Ureaplasma urealyticum serovar 10 (strain ATCC 33699 / Western)).